Consider the following 263-residue polypeptide: HTH-type transcriptional repressor NanR (263 aa).

Positions methionine 1 to leucine 22 are disordered. The 69-residue stretch at lysine 30 to proline 98 folds into the HTH gntR-type domain. The segment at residues glutamate 58–alanine 77 is a DNA-binding region (H-T-H motif).

This sequence belongs to the NanR family.

Functionally, transcriptional repressor that controls expression of the genes required for the catabolism of sialic acids. The protein is HTH-type transcriptional repressor NanR of Shigella boydii serotype 4 (strain Sb227).